A 465-amino-acid polypeptide reads, in one-letter code: GTPase Der (465 aa).

EngA-type G domains follow at residues 3–167 (PLVA…PERS) and 179–352 (IHIA…VSAL). Residues 9–16 (GRPNVGKS), 57–61 (DTGGM), 119–122 (NKID), 185–192 (GRPNVGKS), 232–236 (DTAGL), and 297–300 (NKWD) contribute to the GTP site. The KH-like domain occupies 353 to 437 (RQFSTSEVNK…PVRFLFREGD (85 aa)).

This sequence belongs to the TRAFAC class TrmE-Era-EngA-EngB-Septin-like GTPase superfamily. EngA (Der) GTPase family. Associates with the 50S ribosomal subunit.

In terms of biological role, GTPase that plays an essential role in the late steps of ribosome biogenesis. The protein is GTPase Der of Xylella fastidiosa (strain M12).